We begin with the raw amino-acid sequence, 351 residues long: Tetraacyldisaccharide 4'-kinase (351 aa).

An ATP-binding site is contributed by 61-68; the sequence is TAGGTGKT.

This sequence belongs to the LpxK family.

It catalyses the reaction a lipid A disaccharide + ATP = a lipid IVA + ADP + H(+). It participates in glycolipid biosynthesis; lipid IV(A) biosynthesis; lipid IV(A) from (3R)-3-hydroxytetradecanoyl-[acyl-carrier-protein] and UDP-N-acetyl-alpha-D-glucosamine: step 6/6. In terms of biological role, transfers the gamma-phosphate of ATP to the 4'-position of a tetraacyldisaccharide 1-phosphate intermediate (termed DS-1-P) to form tetraacyldisaccharide 1,4'-bis-phosphate (lipid IVA). The chain is Tetraacyldisaccharide 4'-kinase from Xanthomonas campestris pv. campestris (strain 8004).